We begin with the raw amino-acid sequence, 587 residues long: Kelch-like protein 3 (587 aa).

The tract at residues 1–24 is disordered; the sequence is MEGESVKPSPQPTEQAGDGEKNRR. The BTB domain maps to 50–117; the sequence is CDVMIVAEDV…IYTAEIEVTE (68 aa). One can recognise a BACK domain in the interval 152–254; sequence CLGIRAFADV…PRDYLVQTVE (103 aa). Threonine 295 is subject to Phosphothreonine. Kelch repeat units lie at residues 302–347, 348–394, 396–441, 442–490, 491–537, and 539–585; these read VMIV…FMAG, HVYA…VLND, LYAV…VVEG, KLYA…VLSG, QLYA…AVNG, and LYVV…VSAS. Threonine 375 is modified (phosphothreonine). Residues serine 376 and serine 433 each carry the phosphoserine modification.

This sequence belongs to the KLHL3 family. Homodimer. Component of the BCR(KLHL3) E3 ubiquitin ligase complex, at least composed of CUL3 and KLHL3 and RBX1. Interacts with CLDN8. In terms of processing, phosphorylation at Ser-433 by PKA or PKC decreases the interaction with WNK1 and WNK4, leading to inhibit their degradation by the BCR(KLHL3) complex. Phosphorylated at Ser-433 by PKC in response to angiotensin II signaling, decreasing ability to promote degradation of WNK1 and WNK4, leading to activation of Na-Cl cotransporter SLC12A3/NCC. Phosphorylation at Ser-433 is increased by insulin. Dephosphorylated at Ser-433 by calcineurin PPP3CA, promoting degradation of WNK1 and WNK4.

The protein resides in the cytoplasm. The protein localises to the cytoskeleton. Its subcellular location is the cytosol. It functions in the pathway protein modification; protein ubiquitination. Its function is as follows. Substrate-specific adapter of a BCR (BTB-CUL3-RBX1) E3 ubiquitin ligase complex that acts as a regulator of ion transport in the distal nephron. The BCR(KLHL3) complex acts by mediating ubiquitination and degradation of WNK1 and WNK4, two activators of Na-Cl cotransporter SLC12A3/NCC in distal convoluted tubule cells of kidney, thereby regulating NaCl reabsorption. The BCR(KLHL3) complex also mediates ubiquitination and degradation of WNK3. The BCR(KLHL3) complex also mediates ubiquitination of CLDN8, a tight-junction protein required for paracellular chloride transport in the kidney, leading to its degradation. The protein is Kelch-like protein 3 (Klhl3) of Rattus norvegicus (Rat).